We begin with the raw amino-acid sequence, 1114 residues long: Extracellular sulfatase SULF-1 homolog (1114 aa).

Positions 1–25 (MMRHSSLRLIIGGLILLLFVLNVFS) are cleaved as a signal peptide. Ca(2+)-binding residues include D62, D63, and C98. The Nucleophile role is filled by C98. At C98 the chain carries 3-oxoalanine (Cys). Residues N122, N159, N181, N208, and N251 are each glycosylated (N-linked (GlcNAc...) asparagine). 2 residues coordinate Ca(2+): D327 and H328. Residue N447 is glycosylated (N-linked (GlcNAc...) asparagine). The span at 466 to 479 (SSSSTAATLMSSTA) shows a compositional bias: low complexity. Positions 466 to 504 (SSSSTAATLMSSTAQQPEDGEEEVETDNEEDDVDGDGAM) are disordered. Residues 483–502 (EDGEEEVETDNEEDDVDGDG) show a composition bias toward acidic residues. 3 N-linked (GlcNAc...) asparagine glycosylation sites follow: N683, N713, and N743. The interval 781-812 (KQLRESNKQALAAGRRNDNRRRNDQSVLDSGA) is disordered. Residues 795 to 804 (RRNDNRRRND) show a composition bias toward basic and acidic residues. The N-linked (GlcNAc...) asparagine glycan is linked to N817. Positions 876 to 895 (ADSKEMAREARRKLKEERQR) are enriched in basic and acidic residues. Positions 876–901 (ADSKEMAREARRKLKEERQRKKERKR) are disordered. 3 N-linked (GlcNAc...) asparagine glycosylation sites follow: N945, N955, and N974. The disordered stretch occupies residues 1073-1114 (LSKYNRLTGSQQSHMKRRPWKQTPLQQSPRFLRTHSVTPAQA). Over residues 1095–1114 (TPLQQSPRFLRTHSVTPAQA) the composition is skewed to polar residues.

It belongs to the sulfatase family. Ca(2+) is required as a cofactor. The conversion to 3-oxoalanine (also known as C-formylglycine, FGly), of a serine or cysteine residue in prokaryotes and of a cysteine residue in eukaryotes, is critical for catalytic activity.

It is found in the endoplasmic reticulum. It localises to the golgi apparatus. The protein resides in the golgi stack. Its subcellular location is the cell surface. The sequence is that of Extracellular sulfatase SULF-1 homolog (Sulf1) from Drosophila melanogaster (Fruit fly).